The sequence spans 144 residues: Benzoylsuccinyl-CoA thiolase subunit BbsA (144 aa).

The Zn(2+) site is built by C40, C43, C54, and C57.

This sequence belongs to the BbsA family. In terms of assembly, heterotetramer composed of two BbsA subunits and two BbsB subunits. BbsA forms homodimeric subcomplexes. Both BbsA and BbsB are essential for enzymatic activity.

It catalyses the reaction (S)-2-benzoylsuccinyl-CoA + CoA = benzoyl-CoA + succinyl-CoA. The protein operates within xenobiotic degradation; toluene degradation. Its function is as follows. Component of the BbsAB thiolase complex, which catalyzes the thiolytic cleavage of (S)-2-benzoylsuccinyl-CoA to succinyl-CoA and benzoyl-CoA, the final step of anaerobic toluene metabolism. The BbsA subunit critically contributes to an induced-fit process for productive binding of a CoA substrate into the active site of BbsB. The chain is Benzoylsuccinyl-CoA thiolase subunit BbsA from Thauera aromatica.